The sequence spans 113 residues: MATNITMFLIVITLTSVAAQTFQYSRGWTNGKRDGHKTEDIRDLTNNLERILSPCQMNKLKYVLEGKPLNERLLGPCDTSKTRSTTNPSDTNTSAVKTPCSTHFNKHCYSFSY.

A signal peptide spans 1–19 (MATNITMFLIVITLTSVAA). Gln20 carries the post-translational modification Pyrrolidone carboxylic acid. Residue Asn30 is modified to Asparagine amide. The tract at residues 74–96 (LGPCDTSKTRSTTNPSDTNTSAV) is disordered. Polar residues predominate over residues 82–96 (TRSTTNPSDTNTSAV).

It belongs to the corazonin family. In terms of tissue distribution, four pairs of lateral neurosecretory cells in the brains of late instar larvae, pupae and adults.

Its subcellular location is the secreted. In terms of biological role, cardioactive peptide. Corazonin is probably involved in the physiological regulation of the heart beat. The protein is Pro-corazonin of Galleria mellonella (Greater wax moth).